Reading from the N-terminus, the 112-residue chain is uncharacterized protein (112 aa).

2 helical membrane passes run 55–75 and 91–111; these read LLEI…PTLF and LIML…LLLL.

Its subcellular location is the membrane. This is an uncharacterized protein from Saccharomyces cerevisiae (strain ATCC 204508 / S288c) (Baker's yeast).